Here is a 419-residue protein sequence, read N- to C-terminus: Bilin biosynthesis protein CpeY (419 aa).

Involved in the biosynthesis of bilin. The chain is Bilin biosynthesis protein CpeY (cpeY) from Synechococcus sp. (strain WH8020).